The sequence spans 274 residues: 2,3,4,5-tetrahydropyridine-2,6-dicarboxylate N-succinyltransferase (274 aa).

This sequence belongs to the transferase hexapeptide repeat family.

The protein resides in the cytoplasm. It carries out the reaction (S)-2,3,4,5-tetrahydrodipicolinate + succinyl-CoA + H2O = (S)-2-succinylamino-6-oxoheptanedioate + CoA. The protein operates within amino-acid biosynthesis; L-lysine biosynthesis via DAP pathway; LL-2,6-diaminopimelate from (S)-tetrahydrodipicolinate (succinylase route): step 1/3. This is 2,3,4,5-tetrahydropyridine-2,6-dicarboxylate N-succinyltransferase from Klebsiella pneumoniae (strain 342).